A 452-amino-acid chain; its full sequence is Scaffold protein ILK (452 aa).

M1 carries the N-acetylmethionine modification. ANK repeat units lie at residues 2 to 30, 31 to 63, 64 to 96, 97 to 129, and 130 to 174; these read DDIF…LNQG, DDHG…INVM, NRGD…INAV, NEHG…VSIC, and NKYG…GTTR. Positions 33 to 139 are interaction with LIMS1; the sequence is HGFSPLHWAC…NKYGEMPVDK (107 aa). T173 carries the post-translational modification Phosphothreonine; by PAK1. Positions 180 to 212 are PH-like; mediates interaction with TGFB1I1; the sequence is GTLNKHSGIDFKQLNFLTKLNENHSGELWKGRW. Position 186 is a phosphoserine (S186). Positions 193-446 constitute a Protein kinase domain; sequence LNFLTKLNEN…PKFDMIVPIL (254 aa). ATP-binding residues include N200, N202, H203, S204, and K220. S246 is modified (phosphoserine; by PAK1). 3 residues coordinate ATP: H270, M272, and N279. D339 is a Mg(2+) binding site. K341 lines the ATP pocket. Positions 363–371 match the Nuclear localization signal motif; sequence KKPEDTNRR. K426 carries the N6-acetyllysine modification.

This sequence belongs to the protein kinase superfamily. TKL Ser/Thr protein kinase family. Component of the heterotrimeric IPP (ILK-PINCH-PARVIN) complex composed of ILK, LIMS1/PINCH and PARVA; the complex binds to F-actin via the C-terminal tail of LIMS1 and the N-terminal region of PARVA, promoting F-actin filament bundling. Formation of the IPP complex is dependent on protein kinase C and precedes integrin-mediated cell adhesion and spreading. ILK also interacts with LIMS2/PINCH2 and with PARVB and PARVG which may substitute for LIMS1 and PARVA in the IPP complex; PARVA and PARVB compete for the same binding site. Interaction with PARVG promotes the establishment of cell polarity required for leukocyte migration. Interacts with the cytoplasmic domain of integrin ITGB1 and may also interact with integrins ITGB2, ITGB3 and/or ITGB5. Interacts probably also with TGFB1I1. Interacts (via ANK repeats) with EPHA1 (via SAM domain); stimulated by EFNA1 but independent of the kinase activity of EPHA1. Interacts with FERMT2. Interacts with LIMD2; leading to activate the protein kinase activity. Interacts with PXN/PAXILLIN (via LD motif 4). Interacts with CCDC25 (via cytoplasmic region); initiating the ILK-PARVB cascade to induce cytoskeleton rearrangement and directional migration of cells. Interacts with IQGAP1; the interaction is required for localization of IQGAP1 to the cell cortex. Phosphorylation by PAK1 modulates ILK subcellular location by promoting its nuclear export. Highly expressed in heart followed by skeletal muscle, pancreas and kidney. Weakly expressed in placenta, lung and liver.

It is found in the cell junction. Its subcellular location is the focal adhesion. The protein localises to the cell membrane. The protein resides in the cell projection. It localises to the lamellipodium. It is found in the cytoplasm. Its subcellular location is the myofibril. The protein localises to the sarcomere. The protein resides in the nucleus. It localises to the cytoskeleton. It is found in the microtubule organizing center. Its subcellular location is the centrosome. The protein localises to the cell cortex. Its function is as follows. Scaffold protein which mediates protein-protein interactions during a range of cellular events including focal adhesion assembly, cell adhesion and cell migration. Regulates integrin-mediated signal transduction by contributing to inside-out integrin activation. Recruits PARVA and LIMS1/PITCH to form the heterotrimeric IPP (ILK-PINCH-PARVIN) complex which binds to F-actin via the C-terminal tail of LIMS1 and the N-terminal region of PARVA, promoting F-actin filament bundling, a process required to generate force for actin cytoskeleton reorganization and subsequent dynamic cell adhesion events such as cell spreading and migration. Binding to PARVA promotes effective assembly of ILK into focal adhesions while PARVA-bound ILK can simultaneously engage integrin-beta cytoplasmic tails to mediate cell adhesion. Plays a role with PARVG in promoting the cell adhesion and spreading of leukocytes. Acts as an upstream effector of both AKT1/PKB and GSK3. Mediates trafficking of caveolae to the cell surface in an ITGB1-dependent manner by promoting the recruitment of IQGAP1 to the cell cortex which cooperates with its effector DIAPH1 to locally stabilize microtubules and allow stable insertion of caveolae into the plasma membrane. Required for the maintenance of mitotic spindle integrity by promoting phosphorylation of TACC3 by AURKA. Associates with chromatin and may act as a negative regulator of transcription when located in the nucleus. The protein is Scaffold protein ILK of Homo sapiens (Human).